A 944-amino-acid polypeptide reads, in one-letter code: Nonsense-mediated mRNA decay factor SMG8 (944 aa).

2 disordered regions span residues 559-601 (LNNG…SNCC) and 629-654 (ASSE…TDNE). Residues 568–589 (QDEDAEEDEAEEEEGQEQEQPT) show a composition bias toward acidic residues. Polar residues predominate over residues 629-640 (ASSEQLLNSEQN). The span at 641–650 (TTSSGTSSAD) shows a compositional bias: low complexity.

The protein belongs to the SMG8 family.

In terms of biological role, involved in nonsense-mediated decay (NMD) of mRNAs containing premature stop codons. Probable component of kinase complex containing nonC and recruited to stalled ribosomes. The chain is Nonsense-mediated mRNA decay factor SMG8 from Drosophila melanogaster (Fruit fly).